Consider the following 188-residue polypeptide: Elongation factor P-like protein (188 aa).

The protein belongs to the elongation factor P family.

The polypeptide is Elongation factor P-like protein (Xanthomonas oryzae pv. oryzae (strain MAFF 311018)).